The sequence spans 359 residues: Type II methyltransferase M.HinfI (359 aa).

Positions 275 to 358 (KVPMKTLIEA…LDSLRYEYTN (84 aa)) constitute an RAMA domain.

It belongs to the N(4)/N(6)-methyltransferase family.

It catalyses the reaction a 2'-deoxyadenosine in DNA + S-adenosyl-L-methionine = an N(6)-methyl-2'-deoxyadenosine in DNA + S-adenosyl-L-homocysteine + H(+). Its function is as follows. A beta subtype methylase that recognizes the double-stranded sequence 5'-GANTC-3', methylates A-2 on both strands, and protects the DNA from cleavage by the HinfI endonuclease. In Haemophilus influenzae, this protein is Type II methyltransferase M.HinfI (hinfIM).